The sequence spans 365 residues: Chorismate synthase (365 aa).

Residue R48 coordinates NADP(+). FMN-binding positions include 125–127 (RSS), 238–239 (NA), G278, 293–297 (KPTSS), and R319.

This sequence belongs to the chorismate synthase family. As to quaternary structure, homotetramer. It depends on FMNH2 as a cofactor.

It catalyses the reaction 5-O-(1-carboxyvinyl)-3-phosphoshikimate = chorismate + phosphate. Its pathway is metabolic intermediate biosynthesis; chorismate biosynthesis; chorismate from D-erythrose 4-phosphate and phosphoenolpyruvate: step 7/7. In terms of biological role, catalyzes the anti-1,4-elimination of the C-3 phosphate and the C-6 proR hydrogen from 5-enolpyruvylshikimate-3-phosphate (EPSP) to yield chorismate, which is the branch point compound that serves as the starting substrate for the three terminal pathways of aromatic amino acid biosynthesis. This reaction introduces a second double bond into the aromatic ring system. This Ruthia magnifica subsp. Calyptogena magnifica protein is Chorismate synthase.